Reading from the N-terminus, the 538-residue chain is CTP synthase (538 aa).

An amidoligase domain region spans residues 1-265 (MARYIFVTGG…DLQVLNYFKL (265 aa)). Ser13 contributes to the CTP binding site. Residue Ser13 participates in UTP binding. ATP contacts are provided by residues 14-19 (SLGKGL) and Asp71. Positions 71 and 139 each coordinate Mg(2+). CTP is bound by residues 146 to 148 (DIE), 186 to 191 (KTKPTQ), and Lys222. UTP-binding positions include 186 to 191 (KTKPTQ) and Lys222. One can recognise a Glutamine amidotransferase type-1 domain in the interval 291–538 (NIAIIGKYVE…SFIKAAKNHK (248 aa)). Gly353 contacts L-glutamine. The Nucleophile; for glutamine hydrolysis role is filled by Cys380. L-glutamine-binding positions include 381–384 (YGMQ), Glu404, and Arg468. Residues His513 and Glu515 contribute to the active site.

It belongs to the CTP synthase family. As to quaternary structure, homotetramer.

It catalyses the reaction UTP + L-glutamine + ATP + H2O = CTP + L-glutamate + ADP + phosphate + 2 H(+). The enzyme catalyses L-glutamine + H2O = L-glutamate + NH4(+). The catalysed reaction is UTP + NH4(+) + ATP = CTP + ADP + phosphate + 2 H(+). It functions in the pathway pyrimidine metabolism; CTP biosynthesis via de novo pathway; CTP from UDP: step 2/2. Allosterically activated by GTP, when glutamine is the substrate; GTP has no effect on the reaction when ammonia is the substrate. The allosteric effector GTP functions by stabilizing the protein conformation that binds the tetrahedral intermediate(s) formed during glutamine hydrolysis. Inhibited by the product CTP, via allosteric rather than competitive inhibition. Catalyzes the ATP-dependent amination of UTP to CTP with either L-glutamine or ammonia as the source of nitrogen. Regulates intracellular CTP levels through interactions with the four ribonucleotide triphosphates. This Pelagibacter ubique (strain HTCC1062) protein is CTP synthase.